Here is a 782-residue protein sequence, read N- to C-terminus: Zinc finger and SCAN domain-containing protein 10 (782 aa).

Residues 1 to 37 (MLAEPVPDALEQEHPGAVKLEEDEVGEEDPRLAESRP) are disordered. In terms of domain architecture, SCAN box spans 1 to 71 (MLAEPVPDAL…GRLRELCNHW (71 aa)). Basic and acidic residues-rich tracts occupy residues 11 to 20 (EQEHPGAVKL) and 28 to 37 (EDPRLAESRP). Residues Ser160 and Ser206 each carry the phosphoserine modification. Disordered regions lie at residues 197-233 (LAPS…ENSR) and 290-321 (SQTE…TPAD). 14 C2H2-type zinc fingers span residues 292–315 (TEKP…STGW), 321–343 (DGSE…EMQF), 349–371 (GVNF…NLQP), 377–399 (SFRC…HMRT), 421–443 (LTKH…NQGF), 467–489 (EGKT…TFKR), 495–517 (RHLR…SLSS), 523–545 (PYVC…HTRR), 551–573 (RPFS…SHQQ), 579–601 (KPHA…RHLL), 607–629 (RPYH…RHVR), 635–657 (KPCR…RHQR), 669–691 (ICGH…TGER), and 697–719 (TCGR…TGSK). Over residues 302-313 (LTQTVGQETSST) the composition is skewed to polar residues. Gln485 carries the N5-methylglutamine modification. A disordered region spans residues 491 to 522 (SSLKRHLRNHAKDKDHLSSEDPGSLSSSQESN). Positions 500–509 (HAKDKDHLSS) are enriched in basic and acidic residues. Residues 510-521 (EDPGSLSSSQES) show a composition bias toward low complexity.

As to quaternary structure, interacts with POU5F1/OCT4 and SOX2. Post-translationally, methylated at Gln-485 by N6AMT1. As to expression, embryonic stem (ES) cell-specific. Not expressed in adult, except in testis.

The protein localises to the nucleus. Its function is as follows. Embryonic stem (ES) cell-specific transcription factor required to maintain ES cell pluripotency. Can both activate and /or repress expression of target genes, depending on the context. Specifically binds the 5'-[GA]CGCNNGCG[CT]-3' DNA consensus sequence. Regulates expression of POU5F1/OCT4, ZSCAN4 and ALYREF/THOC4. This is Zinc finger and SCAN domain-containing protein 10 (Zscan10) from Mus musculus (Mouse).